The sequence spans 1345 residues: DNA-directed RNA polymerase subunit beta' (1345 aa).

The Zn(2+) site is built by C60, C62, C75, and C78. 3 residues coordinate Mg(2+): D536, D538, and D540. Zn(2+)-binding residues include C895, C974, C981, and C984. A disordered region spans residues 1325–1345 (DDNDNPVDFGDEFRIDPDELK). Residues 1335–1345 (DEFRIDPDELK) are compositionally biased toward basic and acidic residues.

Belongs to the RNA polymerase beta' chain family. In terms of assembly, the RNAP catalytic core consists of 2 alpha, 1 beta, 1 beta' and 1 omega subunit. When a sigma factor is associated with the core the holoenzyme is formed, which can initiate transcription. Mg(2+) is required as a cofactor. The cofactor is Zn(2+).

It catalyses the reaction RNA(n) + a ribonucleoside 5'-triphosphate = RNA(n+1) + diphosphate. DNA-dependent RNA polymerase catalyzes the transcription of DNA into RNA using the four ribonucleoside triphosphates as substrates. This Bifidobacterium animalis subsp. lactis (strain AD011) protein is DNA-directed RNA polymerase subunit beta'.